Here is a 314-residue protein sequence, read N- to C-terminus: Nodulation protein D 1 (314 aa).

In terms of domain architecture, HTH lysR-type spans 6–63 (LDLNLLVALDALMTERNLTAAARQINLSQPAMSAAIARLRSYFRDELFTMRGRELVPT). Residues 23-42 (LTAAARQINLSQPAMSAAIA) constitute a DNA-binding region (H-T-H motif).

It belongs to the LysR transcriptional regulatory family.

In terms of biological role, nodD regulates the expression of the nodABCFE genes which encode other nodulation proteins. NodD is also a negative regulator of its own expression. Binds flavonoids as inducers. In Bradyrhizobium elkanii, this protein is Nodulation protein D 1 (nodD1).